The chain runs to 500 residues: Aspartyl/glutamyl-tRNA(Asn/Gln) amidotransferase subunit B (500 aa).

This sequence belongs to the GatB/GatE family. GatB subfamily. In terms of assembly, heterotrimer of A, B and C subunits.

The enzyme catalyses L-glutamyl-tRNA(Gln) + L-glutamine + ATP + H2O = L-glutaminyl-tRNA(Gln) + L-glutamate + ADP + phosphate + H(+). It carries out the reaction L-aspartyl-tRNA(Asn) + L-glutamine + ATP + H2O = L-asparaginyl-tRNA(Asn) + L-glutamate + ADP + phosphate + 2 H(+). Allows the formation of correctly charged Asn-tRNA(Asn) or Gln-tRNA(Gln) through the transamidation of misacylated Asp-tRNA(Asn) or Glu-tRNA(Gln) in organisms which lack either or both of asparaginyl-tRNA or glutaminyl-tRNA synthetases. The reaction takes place in the presence of glutamine and ATP through an activated phospho-Asp-tRNA(Asn) or phospho-Glu-tRNA(Gln). In Rhizobium johnstonii (strain DSM 114642 / LMG 32736 / 3841) (Rhizobium leguminosarum bv. viciae), this protein is Aspartyl/glutamyl-tRNA(Asn/Gln) amidotransferase subunit B.